Here is a 126-residue protein sequence, read N- to C-terminus: uncharacterized protein (126 aa).

The Extracellular portion of the chain corresponds to 1-9 (MCTYIITQS). Residues 10 to 30 (FFFLPCLSFLFFKLVGFFDSV) form a helical membrane-spanning segment. The Cytoplasmic segment spans residues 31-73 (FTAGKSLRIMFELPIFDKLTSCFAAIDCSATSLDIPFAEEELF). A helical transmembrane segment spans residues 74-94 (LMLVSEPVLIPFLFVFEFMLI). Over 95–126 (CKPCGSRSRFGFPVKNVSDFEETLEFDPTLLV) the chain is Extracellular.

The protein resides in the membrane. This is an uncharacterized protein from Saccharomyces cerevisiae (strain ATCC 204508 / S288c) (Baker's yeast).